Reading from the N-terminus, the 312-residue chain is tRNA pseudouridine synthase B (312 aa).

Asp37 (nucleophile) is an active-site residue.

It belongs to the pseudouridine synthase TruB family. Type 1 subfamily.

The enzyme catalyses uridine(55) in tRNA = pseudouridine(55) in tRNA. Responsible for synthesis of pseudouridine from uracil-55 in the psi GC loop of transfer RNAs. The polypeptide is tRNA pseudouridine synthase B (Thermus thermophilus (strain ATCC BAA-163 / DSM 7039 / HB27)).